The following is a 746-amino-acid chain: NAD(P)H-quinone oxidoreductase subunit 5, chloroplastic (746 aa).

16 consecutive transmembrane segments (helical) span residues W9 to F29, W40 to I60, I89 to I109, F125 to I145, V147 to T167, G185 to F205, N219 to A239, T258 to A278, L280 to I300, L327 to I347, A354 to S374, T396 to S416, W425 to Y445, I546 to P566, F607 to Y627, and L723 to L743.

The protein belongs to the complex I subunit 5 family. As to quaternary structure, NDH is composed of at least 16 different subunits, 5 of which are encoded in the nucleus.

It is found in the plastid. It localises to the chloroplast thylakoid membrane. It carries out the reaction a plastoquinone + NADH + (n+1) H(+)(in) = a plastoquinol + NAD(+) + n H(+)(out). The enzyme catalyses a plastoquinone + NADPH + (n+1) H(+)(in) = a plastoquinol + NADP(+) + n H(+)(out). Its function is as follows. NDH shuttles electrons from NAD(P)H:plastoquinone, via FMN and iron-sulfur (Fe-S) centers, to quinones in the photosynthetic chain and possibly in a chloroplast respiratory chain. The immediate electron acceptor for the enzyme in this species is believed to be plastoquinone. Couples the redox reaction to proton translocation, and thus conserves the redox energy in a proton gradient. This Carica papaya (Papaya) protein is NAD(P)H-quinone oxidoreductase subunit 5, chloroplastic (ndhF).